Reading from the N-terminus, the 219-residue chain is Occludin/ELL domain-containing protein 1 (219 aa).

Residues 1-110 (MQIHAGPASR…DYELKYPPVT (110 aa)) are disordered. The span at 17–43 (LARLSGPEATCNSRPAARGRQRAAAPR) shows a compositional bias: low complexity. Over residues 72 to 93 (VFADELRPREPLHPEKHPRDLG) the composition is skewed to basic and acidic residues. The OCEL domain maps to 100–210 (PDYELKYPPV…QIRKFDDQQD (111 aa)).

Belongs to the ELL/occludin family.

This is Occludin/ELL domain-containing protein 1 (Ocel1) from Mus musculus (Mouse).